Here is a 471-residue protein sequence, read N- to C-terminus: Putative multidrug resistance protein MdtD (471 aa).

Helical transmembrane passes span 12-32 (LWIV…VNTA), 49-69 (MVVV…GWLA), 77-97 (IFFT…WSST), 102-124 (VLAR…LTVM), 138-158 (FVTL…GILV), 165-185 (WIFL…LMLM), 197-217 (LSGF…LDGS), 222-242 (LSPL…ALYL), 263-283 (FSLG…LPFM), 286-306 (VFLQ…MIPM), 342-362 (LLFM…VLFL), 396-416 (MIMQ…LGMF), and 431-451 (VFMY…LIFA).

The protein belongs to the major facilitator superfamily. TCR/Tet family.

Its subcellular location is the cell inner membrane. This Citrobacter koseri (strain ATCC BAA-895 / CDC 4225-83 / SGSC4696) protein is Putative multidrug resistance protein MdtD.